A 127-amino-acid polypeptide reads, in one-letter code: Large ribosomal subunit protein bL12 (127 aa).

The protein belongs to the bacterial ribosomal protein bL12 family. Homodimer. Part of the ribosomal stalk of the 50S ribosomal subunit. Forms a multimeric L10(L12)X complex, where L10 forms an elongated spine to which 2 to 4 L12 dimers bind in a sequential fashion. Binds GTP-bound translation factors.

In terms of biological role, forms part of the ribosomal stalk which helps the ribosome interact with GTP-bound translation factors. Is thus essential for accurate translation. This Streptomyces virginiae (Streptomyces cinnamonensis) protein is Large ribosomal subunit protein bL12.